An 804-amino-acid polypeptide reads, in one-letter code: Leucine--tRNA ligase (804 aa).

Positions 40-51 (PYPSGAGLHVGH) match the 'HIGH' region motif. The 'KMSKS' region motif lies at 574–578 (KMSKS). Lysine 577 lines the ATP pocket.

The protein belongs to the class-I aminoacyl-tRNA synthetase family.

The protein localises to the cytoplasm. The catalysed reaction is tRNA(Leu) + L-leucine + ATP = L-leucyl-tRNA(Leu) + AMP + diphosphate. This Shouchella clausii (strain KSM-K16) (Alkalihalobacillus clausii) protein is Leucine--tRNA ligase.